The chain runs to 446 residues: tRNA-2-methylthio-N(6)-dimethylallyladenosine synthase (446 aa).

The 118-residue stretch at 3 to 120 folds into the MTTase N-terminal domain; that stretch reads KKIYIKTFGC…LPEMLKQRRS (118 aa). [4Fe-4S] cluster is bound by residues C12, C49, C83, C157, C161, and C164. The 233-residue stretch at 143-375 folds into the Radical SAM core domain; it reads KVEGATAFVS…QAVIDQNTRR (233 aa). The 67-residue stretch at 378 to 444 folds into the TRAM domain; it reads DEMVGTVQRI…AYTLRGEIIV (67 aa).

It belongs to the methylthiotransferase family. MiaB subfamily. As to quaternary structure, monomer. [4Fe-4S] cluster is required as a cofactor.

The protein resides in the cytoplasm. It carries out the reaction N(6)-dimethylallyladenosine(37) in tRNA + (sulfur carrier)-SH + AH2 + 2 S-adenosyl-L-methionine = 2-methylsulfanyl-N(6)-dimethylallyladenosine(37) in tRNA + (sulfur carrier)-H + 5'-deoxyadenosine + L-methionine + A + S-adenosyl-L-homocysteine + 2 H(+). Its function is as follows. Catalyzes the methylthiolation of N6-(dimethylallyl)adenosine (i(6)A), leading to the formation of 2-methylthio-N6-(dimethylallyl)adenosine (ms(2)i(6)A) at position 37 in tRNAs that read codons beginning with uridine. The sequence is that of tRNA-2-methylthio-N(6)-dimethylallyladenosine synthase from Janthinobacterium sp. (strain Marseille) (Minibacterium massiliensis).